The following is a 343-amino-acid chain: Farnesyl pyrophosphate synthase (343 aa).

Residues Lys-49, Arg-52, and Gln-87 each coordinate isopentenyl diphosphate. Residues Asp-94 and Asp-98 each coordinate Mg(2+). Arg-103 provides a ligand contact to dimethylallyl diphosphate. Arg-104 lines the isopentenyl diphosphate pocket. Positions 191, 192, 230, 247, and 256 each coordinate dimethylallyl diphosphate.

It belongs to the FPP/GGPP synthase family. Mg(2+) serves as cofactor. In terms of tissue distribution, expressed both in apical and sub-apical cells of glandular secretory trichomes.

It is found in the cytoplasm. Its subcellular location is the nucleus. The catalysed reaction is isopentenyl diphosphate + dimethylallyl diphosphate = (2E)-geranyl diphosphate + diphosphate. It catalyses the reaction isopentenyl diphosphate + (2E)-geranyl diphosphate = (2E,6E)-farnesyl diphosphate + diphosphate. It functions in the pathway isoprenoid biosynthesis; farnesyl diphosphate biosynthesis; farnesyl diphosphate from geranyl diphosphate and isopentenyl diphosphate: step 1/1. Its pathway is sesquiterpene biosynthesis. The protein operates within isoprenoid biosynthesis; geranyl diphosphate biosynthesis; geranyl diphosphate from dimethylallyl diphosphate and isopentenyl diphosphate: step 1/1. In terms of biological role, involved in the biosynthesis of the antimalarial endoperoxide artemisinin. Catalyzes the sequential condensation of isopentenyl pyrophosphate with the allylic pyrophosphates, dimethylallyl pyrophosphate, and then with the resultant geranylpyrophosphate to the ultimate product farnesyl pyrophosphate. Promotes anti-malarial and antimicrobial (toward Gram-positive bacteria B.subtilis and S.aureus) activities of plant crude extract probably by triggering artemisinin levels. The chain is Farnesyl pyrophosphate synthase from Artemisia annua (Sweet wormwood).